Reading from the N-terminus, the 204-residue chain is Large ribosomal subunit protein mL67 (204 aa).

Belongs to the mitochondrion-specific ribosomal protein mL67 family.

It localises to the nucleus. It is found in the mitochondrion. In terms of biological role, transcription factor involved in regulation of RNA polymerase II-dependent transcription. Also involved in regulation of mitochondrial DNA recombination, maintenance and repair, and generation of homoplasmic cells. The protein is Large ribosomal subunit protein mL67 (MHR1) of Yarrowia lipolytica (strain CLIB 122 / E 150) (Yeast).